A 209-amino-acid chain; its full sequence is PF03932 family protein CutC (209 aa).

The protein resides in the cytoplasm. This is PF03932 family protein CutC from Streptococcus pyogenes serotype M6 (strain ATCC BAA-946 / MGAS10394).